We begin with the raw amino-acid sequence, 73 residues long: Protein SlyX homolog (73 aa).

Belongs to the SlyX family.

The protein is Protein SlyX homolog of Haemophilus influenzae (strain PittEE).